We begin with the raw amino-acid sequence, 157 residues long: uncharacterized protein (157 aa).

The HTH marR-type domain maps to 6–157; that stretch reads HDELFQAIQQ…AFFNLWIKYM (152 aa). Positions 66-89 form a DNA-binding region, H-T-H motif; it reads NSFLASRLHISKAAVSKAVHALLK.

It localises to the cytoplasm. This is an uncharacterized protein from Bacillus subtilis (strain 168).